A 674-amino-acid chain; its full sequence is DNA ligase (674 aa).

Residues 35–39, 84–85, and glutamate 116 each bind NAD(+); these read DAEYD and SL. Lysine 118 functions as the N6-AMP-lysine intermediate in the catalytic mechanism. 4 residues coordinate NAD(+): arginine 139, glutamate 176, lysine 293, and lysine 317. Zn(2+) contacts are provided by cysteine 411, cysteine 414, cysteine 429, and cysteine 435. A BRCT domain is found at 593-674; sequence DGVKPLEGTT…LLALLEEHGV (82 aa).

This sequence belongs to the NAD-dependent DNA ligase family. LigA subfamily. Requires Mg(2+) as cofactor. Mn(2+) serves as cofactor.

It catalyses the reaction NAD(+) + (deoxyribonucleotide)n-3'-hydroxyl + 5'-phospho-(deoxyribonucleotide)m = (deoxyribonucleotide)n+m + AMP + beta-nicotinamide D-nucleotide.. Its function is as follows. DNA ligase that catalyzes the formation of phosphodiester linkages between 5'-phosphoryl and 3'-hydroxyl groups in double-stranded DNA using NAD as a coenzyme and as the energy source for the reaction. It is essential for DNA replication and repair of damaged DNA. The chain is DNA ligase from Saccharophagus degradans (strain 2-40 / ATCC 43961 / DSM 17024).